A 956-amino-acid polypeptide reads, in one-letter code: Bromodomain testis-specific protein (956 aa).

Positions 26 to 132 (RLTNQLQFLQ…KLFMQKLSQM (107 aa)) constitute a Bromo 1 domain. A Phosphoserine modification is found at Ser186. Residues 208-219 (KGVKRRADTTTP) carry the Nuclear localization signal motif. The tract at residues 210–239 (VKRRADTTTPTTSIAKASSESPPTLRETKP) is disordered. A compositionally biased stretch (polar residues) spans 216 to 231 (TTTPTTSIAKASSESP). The Bromo 2 domain maps to 266–375 (VKVTEQLKHC…DVFELHFAKI (110 aa)). Disordered regions lie at residues 391–420 (NSAQALSRESSSEASSGDASSEDSEDERVQ), 442–508 (VPLR…PMNY), 607–747 (NQLN…HSQQ), and 859–934 (LEHN…RREA). Residues 392–409 (SAQALSRESSSEASSGDA) show a composition bias toward low complexity. Residues 417–442 (ERVQHLAKLQEQLNAVHQQLQVLSQV) adopt a coiled-coil conformation. The segment covering 445–463 (RKLKKKNEKSKRAPKRKKV) has biased composition (basic residues). The NET domain occupies 496–578 (KSEEEDNAKP…ACLRKRSLKP (83 aa)). The span at 625–640 (PPPPPPPPPPPPPPPE) shows a compositional bias: pro residues. Residues 649 to 688 (DSSSSSGSGSGSSSSSSGSSSSSSSSGSASSSSDSSSSDS) are compositionally biased toward low complexity. A compositionally biased stretch (polar residues) spans 714–724 (KQIQSSVQDIT). A coiled-coil region spans residues 844-940 (EKEVKARTQE…RREAMAGTID (97 aa)). Basic and acidic residues-rich tracts occupy residues 859–874 (LEHNAKDPKVSQENQR) and 915–934 (LLKDRNLAREKEQERRRREA).

The protein belongs to the BET family. Interacts with SMARCE1. Interacts with mRNA splicing machinery proteins SRSF2, DDX5, HNRNPK and TARDBP. Interacts with the acetylated N-terminus of histone H1, H2, H3 and H4. Interacts with P-TEFb components CDK9 and CCNT1/cyclin-T1. Ubiquitinated in a SPOP-dependent manner, leading to proteasomal degradation. In terms of tissue distribution, testis-specific. Expressed in germinal cells from the early meiotic (pachytene) spermatocytes and during spermiogenesis in the round and elongating spermatids until the condensed late spermatids. No expression seen in spermatogonia.

The protein resides in the nucleus. In terms of biological role, testis-specific chromatin protein that specifically binds histone H4 acetylated at 'Lys-5' and 'Lys-8' (H4K5ac and H4K8ac, respectively) and plays a key role in spermatogenesis. Required in late pachytene spermatocytes: plays a role in meiotic and post-meiotic cells by binding to acetylated histones at the promoter of specific meiotic and post-meiotic genes, facilitating their activation at the appropriate time. In the post-meiotic phase of spermatogenesis, binds to hyperacetylated histones and participates in their general removal from DNA. Also recognizes and binds a subset of butyrylated histones: able to bind histone H4 butyrylated at 'Lys-8' (H4K8ac), while it is not able to bind H4 butyrylated at 'Lys-5' (H4K5ac). Also acts as a component of the splicing machinery in pachytene spermatocytes and round spermatids and participates in 3'-UTR truncation of specific mRNAs in post-meiotic spermatids. Required for chromocenter organization, a structure comprised of peri-centromeric heterochromatin. The chain is Bromodomain testis-specific protein (Brdt) from Mus musculus (Mouse).